Reading from the N-terminus, the 457-residue chain is Multidrug resistance protein MdtK (457 aa).

Residues 1-10 are Cytoplasmic-facing; it reads MQKYISEARL. A helical transmembrane segment spans residues 11–31; it reads LLALAIPVILAQIAQTAMGFV. Topologically, residues 32–52 are periplasmic; it reads DTVMAGGYSATDMAAVAIGTS. Residues 53–73 form a helical membrane-spanning segment; it reads IWLPAILFGHGLLLALTPVIA. The Cytoplasmic segment spans residues 74 to 92; it reads QLNGSGRRERIAHQVRQGF. A helical membrane pass occupies residues 93 to 113; sequence WLAGFVSVLIMLVLWNAGYII. Residues 114 to 126 lie on the Periplasmic side of the membrane; it reads RSMENIDPALADK. A helical membrane pass occupies residues 127–147; that stretch reads AVGYLRALLWGAPGYLFFQVA. At 148–159 the chain is on the cytoplasmic side; the sequence is RNQCEGLAKTKP. A helical transmembrane segment spans residues 160-180; sequence GMVMGFIGLLVNIPVNYIFIY. Over 181–191 the chain is Periplasmic; sequence GHFGMPELSGV. The helical transmembrane segment at 192–212 threads the bilayer; the sequence is GCGVATAAVYWAMFLAMVSYI. Residues 213 to 242 are Cytoplasmic-facing; sequence KRARSMRDIRNEKGTAKPDPAVMKRLIQLG. Residues 243 to 263 form a helical membrane-spanning segment; the sequence is LPIALALFFEVTLFAVVALLV. The Periplasmic portion of the chain corresponds to 264–275; the sequence is SPLGIVDVAGHQ. Residues 276–296 form a helical membrane-spanning segment; the sequence is IALNFSSLMFVLPMSLAAAVT. Residues 297-313 are Cytoplasmic-facing; sequence IRVGYRLGQGSTLDAQT. Residues 314-334 traverse the membrane as a helical segment; sequence AARTGLMVGVCMATLTAIFTV. The Periplasmic portion of the chain corresponds to 335–349; sequence SLREQIALLYNDNPE. A helical transmembrane segment spans residues 350–370; sequence VVTLAAHLMLLAAVYQISDSI. At 371-386 the chain is on the cytoplasmic side; that stretch reads QVIGSGILRGYKDTRS. A helical transmembrane segment spans residues 387–407; that stretch reads IFYITFTAYWVLGLPSGYILA. Over 408 to 417 the chain is Periplasmic; sequence LTDLVVEPMG. A helical membrane pass occupies residues 418–438; it reads PAGFWIGFIIGLTSAAIMMML. Residues 439–457 lie on the Cytoplasmic side of the membrane; sequence RMRFLQRLPSAIILQRASR.

It belongs to the multi antimicrobial extrusion (MATE) (TC 2.A.66.1) family. MdtK subfamily.

It is found in the cell inner membrane. Multidrug efflux pump that functions probably as a Na(+)/drug antiporter. This is Multidrug resistance protein MdtK from Shigella dysenteriae serotype 1 (strain Sd197).